Consider the following 150-residue polypeptide: Avidin-related protein 7 (150 aa).

The first 24 residues, 1 to 24 (MVHATSPLLLLLLLSLALVAPGLS), serve as a signal peptide directing secretion. Positions 26–147 (RKCSLTGEWD…GYNNFTRQRT (122 aa)) constitute an Avidin-like domain. Residues Cys-28 and Cys-105 are joined by a disulfide bond. Residues Asn-36 and Ser-40 each contribute to the biotin site. N-linked (GlcNAc...) asparagine glycosylation is found at Asn-41 and Asn-54. Positions 57, 59, and 63 each coordinate biotin. N-linked (GlcNAc...) asparagine glycosylation is present at Asn-93. Biotin contacts are provided by Ser-95, Ser-99, and Asn-140. Residue Asn-141 is glycosylated (N-linked (GlcNAc...) asparagine).

Belongs to the avidin/streptavidin family. As to quaternary structure, homotetramer. In terms of processing, glycosylated.

It localises to the secreted. Functionally, forms a strong non-covalent specific complex with biotin. The sequence is that of Avidin-related protein 7 (AVR7) from Gallus gallus (Chicken).